The primary structure comprises 144 residues: Putative pre-16S rRNA nuclease (144 aa).

Belongs to the YqgF nuclease family.

Its subcellular location is the cytoplasm. Could be a nuclease involved in processing of the 5'-end of pre-16S rRNA. The sequence is that of Putative pre-16S rRNA nuclease from Lacticaseibacillus casei (strain BL23) (Lactobacillus casei).